We begin with the raw amino-acid sequence, 299 residues long: Kruppel-like factor 2 (299 aa).

Disordered stretches follow at residues Tyr-19–His-38 and Tyr-146–Lys-189. A compositionally biased stretch (basic residues) spans His-23–His-38. Residues Ser-153–Lys-180 are compositionally biased toward basic and acidic residues. 3 C2H2-type zinc fingers span residues His-198 to His-222, Tyr-228 to His-252, and Phe-258 to His-280.

This sequence belongs to the krueppel C2H2-type zinc-finger protein family. Expressed predominantly in intestine.

It localises to the nucleus. In terms of biological role, probable transcription factor which regulates lipid metabolism. This Caenorhabditis elegans protein is Kruppel-like factor 2.